The sequence spans 511 residues: Glutamyl-tRNA(Gln) amidotransferase subunit B, mitochondrial (511 aa).

The N-terminal 6 residues, 1 to 6, are a transit peptide targeting the mitochondrion; that stretch reads MLRRYL.

Belongs to the GatB/GatE family. GatB subfamily. As to quaternary structure, subunit of the heterotrimeric GatFAB amidotransferase (AdT) complex, composed of A, B and F subunits.

The protein resides in the mitochondrion. It carries out the reaction L-glutamyl-tRNA(Gln) + L-glutamine + ATP + H2O = L-glutaminyl-tRNA(Gln) + L-glutamate + ADP + phosphate + H(+). Its function is as follows. Allows the formation of correctly charged Gln-tRNA(Gln) through the transamidation of misacylated Glu-tRNA(Gln) in the mitochondria. The reaction takes place in the presence of glutamine and ATP through an activated gamma-phospho-Glu-tRNA(Gln). The protein is Glutamyl-tRNA(Gln) amidotransferase subunit B, mitochondrial of Lodderomyces elongisporus (strain ATCC 11503 / CBS 2605 / JCM 1781 / NBRC 1676 / NRRL YB-4239) (Yeast).